The primary structure comprises 69 residues: Beta-defensin 1 (69 aa).

Positions 1-21 (MKTHYFLLVMLFFLFSQMELG) are cleaved as a signal peptide. The propeptide occupies 22 to 32 (AGILTSLGRRT). 3 disulfide bridges follow: Cys37-Cys66, Cys44-Cys59, and Cys49-Cys67.

It belongs to the beta-defensin family. Monomer. Homodimer. As to expression, highly expressed in kidney.

Its subcellular location is the secreted. The protein localises to the membrane. Functionally, has bactericidal activity. May act as a ligand for C-C chemokine receptor CCR6. Positively regulates the sperm motility and bactericidal activity in a CCR6-dependent manner. Binds to CCR6 and triggers Ca2+ mobilization in the sperm which is important for its motility. This Rattus norvegicus (Rat) protein is Beta-defensin 1 (Defb1).